Reading from the N-terminus, the 361-residue chain is Phosphoserine aminotransferase (361 aa).

L-glutamate is bound at residue R43. Residues 77-78, W103, T153, D173, and Q196 contribute to the pyridoxal 5'-phosphate site; that span reads AS. K197 is subject to N6-(pyridoxal phosphate)lysine. 238–239 is a pyridoxal 5'-phosphate binding site; the sequence is NT.

The protein belongs to the class-V pyridoxal-phosphate-dependent aminotransferase family. SerC subfamily. Homodimer. It depends on pyridoxal 5'-phosphate as a cofactor.

It localises to the cytoplasm. It catalyses the reaction O-phospho-L-serine + 2-oxoglutarate = 3-phosphooxypyruvate + L-glutamate. The catalysed reaction is 4-(phosphooxy)-L-threonine + 2-oxoglutarate = (R)-3-hydroxy-2-oxo-4-phosphooxybutanoate + L-glutamate. It participates in amino-acid biosynthesis; L-serine biosynthesis; L-serine from 3-phospho-D-glycerate: step 2/3. Its pathway is cofactor biosynthesis; pyridoxine 5'-phosphate biosynthesis; pyridoxine 5'-phosphate from D-erythrose 4-phosphate: step 3/5. In terms of biological role, catalyzes the reversible conversion of 3-phosphohydroxypyruvate to phosphoserine and of 3-hydroxy-2-oxo-4-phosphonooxybutanoate to phosphohydroxythreonine. This Pseudomonas syringae pv. syringae (strain B728a) protein is Phosphoserine aminotransferase.